A 1828-amino-acid chain; its full sequence is MMRNKDKSQEEDSSLHSNASSHSASEEASGSDSGSQSESEQGSDPGSGHGSESNSSSESSESQSESESESAGSKSQPVLPEAKEKPASKKERIADVKKMWEEYPDVYGVRRSNRSRQEPSRFNIKEEASSGSESGSPKRRGQRQLKKQEKWKQEPSEDEQEQGTSAESEPEQKKVKARRPVPRRTVPKPRVKKQPKTQRGKRKKQDSSDEDDDDDEAPKRQTRRRAAKNVSYKEDDDFETDSDDLIEMTGEGVDEQQDNSETIEKVLDSRLGKKGATGASTTVYAIEANGDPSGDFDTEKDEGEIQYLIKWKGWSYIHSTWESEESLQQQKVKGLKKLENFKKKEDEIKQWLGKVSPEDVEYFNCQQELASELNKQYQIVERVIAVKTSKSTLGQTDFPAHSRKPAPSNEPEYLCKWMGLPYSECSWEDEALIGKKFQNCIDSFHSRNNSKTIPTRECKALKQRPRFVALKKQPAYLGGENLELRDYQLEGLNWLAHSWCKNNSVILADEMGLGKTIQTISFLSYLFHQHQLYGPFLIVVPLSTLTSWQREFEIWAPEINVVVYIGDLMSRNTIREYEWIHSQTKRLKFNALITTYEILLKDKTVLGSINWAFLGVDEAHRLKNDDSLLYKTLIDFKSNHRLLITGTPLQNSLKELWSLLHFIMPEKFEFWEDFEEDHGKGRENGYQSLHKVLEPFLLRRVKKDVEKSLPAKVEQILRVEMSALQKQYYKWILTRNYKALAKGTRGSTSGFLNIVMELKKCCNHCYLIKPPEENERENGQEILLSLIRSSGKLILLDKLLTRLRERGNRVLIFSQMVRMLDILAEYLTIKHYPFQRLDGSIKGEIRKQALDHFNADGSEDFCFLLSTRAGGLGINLASADTVVIFDSDWNPQNDLQAQARAHRIGQKKQVNIYRLVTKGTVEEEIIERAKKKMVLDHLVIQRMDTTGRTILENNSGRSNSNPFNKEELTAILKFGAEDLFKELEGEESEPQEMDIDEILRLAETRENEVSTSATDELLSQFKVANFATMEDEEELEERPHKDWDEIIPEEQRKKVEEEERQKELEEIYMLPRIRSSTKKAQTNDSDSDTESKRQAQRSSASESETEDSDDDKKPKRRGRPRSVRKDLVEGFTDAEIRRFIKAYKKFGLPLERLECIARDAELVDKSVADLKRLGELIHNSCVSAMQEYEEQLKENASEGKGPGKRRGPTIKISGVQVNVKSIIQHEEEFEMLHKSIPVDPEEKKKYCLTCRVKAAHFDVEWGVEDDSRLLLGIYEHGYGNWELIKTDPELKLTDKILPVETDKKPQGKQLQTRADYLLKLLRKGLEKKGAVTGGEEAKLKKRKPRVKKENKVPRLKEEHGIELSSPRHSDNPSEEGEVKDDGLEKSPMKKKQKKKENKENKEKQMSSRKDKEGDKERKKSKDKKEKPKSGDAKSSSKSKRSQGPVHITAGSEPVPIGEDEDDDLDQETFSICKERMRPVKKALKQLDKPDKGLNVQEQLEHTRNCLLKIGDRIAECLKAYSDQEHIKLWRRNLWIFVSKFTEFDARKLHKLYKMAHKKRSQEEEEQKKKDDVTGGKKPFRPEASGSSRDSLISQSHTSHNLHPQKPHLPASHGPQMHGHPRDNYNHPNKRHFSNADRGDWQRERKFNYGGGNNNPPWGSDRHHQYEQHWYKDHHYGDRRHMDAHRSGSYRPNNMSRKRPYDQYSSDRDHRGHRDYYDRHHHDSKRRRSDEFRPQNYHQQDFRRMSDHRPAMGYHGQGPSDHYRSFHTDKLGEYKQPLPPLHPAVSDPRSPPSQKSPHDSKSPLDHRSPLERSLEQKNNPDYNWNVRKT.

Positions 1–14 (MMRNKDKSQEEDSS) are enriched in basic and acidic residues. Residues 1–243 (MMRNKDKSQE…EDDDFETDSD (243 aa)) form a disordered region. The span at 15–75 (LHSNASSHSA…SESESAGSKS (61 aa)) shows a compositional bias: low complexity. Basic and acidic residues-rich tracts occupy residues 81 to 101 (EAKE…KMWE), 115 to 128 (SRQE…KEEA), and 146 to 155 (KKQEKWKQEP). Residues 175–204 (VKARRPVPRRTVPKPRVKKQPKTQRGKRKK) show a composition bias toward basic residues. 2 positions are modified to phosphoserine: serine 207 and serine 208. Residues 234–243 (EDDDFETDSD) are compositionally biased toward acidic residues. Threonine 240 carries the post-translational modification Phosphothreonine. Residue serine 242 is modified to Phosphoserine. Chromo domains lie at 261–353 (ETIE…QWLG) and 378–456 (QIVE…IPTR). Residues 496 to 666 (AHSWCKNNSV…WSLLHFIMPE (171 aa)) enclose the Helicase ATP-binding domain. 509–516 (DEMGLGKT) provides a ligand contact to ATP. Residues 617–620 (DEAH) carry the DEAH box motif. The region spanning 795 to 946 (LLDKLLTRLR…HLVIQRMDTT (152 aa)) is the Helicase C-terminal domain. Disordered stretches follow at residues 1030 to 1124 (EDEE…RSVR), 1331 to 1462 (VTGG…DEDD), 1556 to 1638 (HKKR…ADRG), and 1680 to 1828 (HMDA…VRKT). Positions 1037–1065 (ERPHKDWDEIIPEEQRKKVEEEERQKELE) are enriched in basic and acidic residues. 4 positions are modified to phosphoserine: serine 1085, serine 1087, serine 1365, and serine 1386. Residues 1347–1371 (KKENKVPRLKEEHGIELSSPRHSDN) show a composition bias toward basic and acidic residues. Basic and acidic residues-rich tracts occupy residues 1396–1431 (ENKE…KSGD) and 1565–1574 (EQKKKDDVTG). Residues 1464-1566 (LDQETFSICK…KKRSQEEEEQ (103 aa)) form a CHD1 helical C-terminal domain (CHCT) region. Over residues 1584 to 1601 (SGSSRDSLISQSHTSHNL) the composition is skewed to polar residues. Composition is skewed to basic and acidic residues over residues 1698-1720 (RPYD…DRHH), 1739-1749 (QDFRRMSDHRP), 1760-1772 (DHYR…KLGE), and 1795-1814 (SPHD…RSLE). Serine 1807 carries the phosphoserine modification.

It belongs to the SNF2/RAD54 helicase family. Interacts with MYOD1. Interacts with histone H3.3.

The protein localises to the nucleus. It catalyses the reaction ATP + H2O = ADP + phosphate + H(+). ATP-dependent chromatin-remodeling factor that specifically binds to the promoter of target genes, leading to chromatin remodeling, possibly by promoting deposition of histone H3.3. Involved in myogenesis via interaction with MYOD1: binds to myogenic gene regulatory sequences and mediates incorporation of histone H3.3 prior to the onset of myogenic gene expression, promoting their expression. The sequence is that of Chromodomain-helicase-DNA-binding protein 2 (CHD2) from Homo sapiens (Human).